The sequence spans 406 residues: Phosphorylase b kinase gamma catalytic chain, liver/testis isoform (406 aa).

Residues 24 to 291 (YDPKDIIGRG…AEQALQHPFF (268 aa)) enclose the Protein kinase domain. Residues 30 to 38 (IGRGVSSVV) and lysine 53 each bind ATP. Residue aspartate 153 is the Proton acceptor of the active site. The calmodulin-binding (domain-N) stretch occupies residues 306–330 (QRFRVAVWTILAAGRVALSSHRLRP). Residues 346–370 (VRRLIDNCAFRLYGHWVKKGEQQNR) form a calmodulin-binding (domain-C) region.

The protein belongs to the protein kinase superfamily. CAMK Ser/Thr protein kinase family. As to quaternary structure, hexadecamer of 4 heterotetramers, each composed of alpha, beta, gamma, and delta subunits. Alpha (PHKA1 or PHKA2) and beta (PHKB) are regulatory subunits, gamma (PHKG1 or PHKG2) is the catalytic subunit, and delta is calmodulin.

The enzyme catalyses 2 ATP + phosphorylase b = 2 ADP + phosphorylase a.. Its function is as follows. Catalytic subunit of the phosphorylase b kinase (PHK), which mediates the neural and hormonal regulation of glycogen breakdown (glycogenolysis) by phosphorylating and thereby activating glycogen phosphorylase. May regulate glycogeneolysis in the testis. In vitro, phosphorylates PYGM. The polypeptide is Phosphorylase b kinase gamma catalytic chain, liver/testis isoform (Phkg2) (Rattus norvegicus (Rat)).